The following is an 85-amino-acid chain: Neurotoxin beta-KTx 14.3 (85 aa).

The signal sequence occupies residues 1 to 20 (MKQYIFFLALIVLTATFAEA). Positions 21–37 (GKKTEILDKVKKVFSKG) are excised as a propeptide. Residues 49-85 (ELGCPFIEKWCEDHCESKKQVGKCENFDCSCVKLGGK) enclose the BetaSPN-type CS-alpha/beta domain. Intrachain disulfides connect Cys-52/Cys-72, Cys-59/Cys-77, and Cys-63/Cys-79.

It belongs to the long chain scorpion toxin family. Class 2 subfamily. Expressed by the venom gland.

The protein localises to the secreted. Functionally, toxin with activity on voltage-gated potassium channels. Moderately and reversibly blocks up to 50% of the activity of Kv7.1/KCNQ1 (tested at 22 uM). 3D-structure modeling of the KCNQ1-toxin complex shows that the toxin interacts with the channel pore domain. Additionally, shows a very weak effect to block voltage-gated potassium channel Kv1.1/KCNA1. In terms of biological role, has a very weak effect to block voltage-gated potassium channel Kv1.1/KCNA1. The protein is Neurotoxin beta-KTx 14.3 of Lychas mucronatus (Chinese swimming scorpion).